A 460-amino-acid chain; its full sequence is Ecdysteroid UDP-glucosyltransferase (460 aa).

A signal peptide spans 1-18 (MFISILLLALAVERILCA).

This sequence belongs to the UDP-glycosyltransferase family.

In terms of biological role, catalyzes the transfer of glucose from UDP-glucose to ecdysteroids which are insect molting hormones. Expression of egt interferes with normal insect development and block molting. The protein is Ecdysteroid UDP-glucosyltransferase (EGT) of Lacanobia oleracea granulosis virus (LoGV).